The following is a 230-amino-acid chain: Dephospho-CoA kinase (230 aa).

A disordered region spans residues 1-21 (MSKYAAAPSPYSHQPQTPEHK). The DPCK domain occupies 26-225 (VVGLTGGIGS…QDYLKLAQQL (200 aa)). Residue 34 to 39 (GSGKSA) coordinates ATP.

The protein belongs to the CoaE family.

The protein localises to the cytoplasm. The enzyme catalyses 3'-dephospho-CoA + ATP = ADP + CoA + H(+). It participates in cofactor biosynthesis; coenzyme A biosynthesis; CoA from (R)-pantothenate: step 5/5. Catalyzes the phosphorylation of the 3'-hydroxyl group of dephosphocoenzyme A to form coenzyme A. The protein is Dephospho-CoA kinase of Psychrobacter cryohalolentis (strain ATCC BAA-1226 / DSM 17306 / VKM B-2378 / K5).